The following is a 164-amino-acid chain: UPF0304 protein MS2240 (164 aa).

Belongs to the UPF0304 family.

The protein is UPF0304 protein MS2240 of Mannheimia succiniciproducens (strain KCTC 0769BP / MBEL55E).